A 317-amino-acid chain; its full sequence is MVNRPYANMNDLANAVAESVQKYLDNSGQARNGLFQKTNNGERDIETERLALQHQLFHLTLDGKLQLSPLPSPVQSVLDIATGDSTWVHAFAEQNPSAYIVANDPSPTSKIPLGLSVIPDASDANEPWTYTRQFDFVHCRQHHRRLDEPRLFKQAFSSLTPGGWLEMQELSNPVTSDDGTLSENNPLSQWGRLLIEASKKMNRPVDNPAKYETWMREAGFVNCHTVAYNWPTNPWPADEKGKTLGLWNLYNVLQRFEEFSVALLVKVLGWEMDDAKTFLGNVKEELMNEGVHGYWPVYVVYGQKPAAPGSDVITDSE.

It belongs to the methyltransferase superfamily. LaeA methyltransferase family.

It participates in secondary metabolite biosynthesis. Functionally, probable methyltransferase; part of the gene cluster that mediates the biosynthesis of terrequinone A, an antitumor agent. The first step in the biosynthetic pathway for terrequinone A is formation of indole pyruvic acid (IPA) from L-tryptophan by the aminotransferase tdiD. The nonribosomal peptide synthase tdiA then immediately converts unstable IPA to didemethylasterriquinone D (DDAQ D), via condensation of 2 IPA molecules. The symmetric connectivity of the 2 IPA molecules is thought to arise by head-to-tail dual Claisen condensations facilitated by the TE domain. TdiB then catalyzes reverse prenylation by transferring dimethylallyl diphosphate to carbon atom 2' of DDAQ D, to yield asterriquinone C-1. Finally, tdiC and tdiE enzymes robustly convert asterriquinone C-1 to terrequinone A via a transformation involving regular prenylation at carbon atom 5, which requires elimination of the hydroxy group on C-5. This is Probable methyltransferase tdiE from Emericella nidulans (strain FGSC A4 / ATCC 38163 / CBS 112.46 / NRRL 194 / M139) (Aspergillus nidulans).